Here is a 97-residue protein sequence, read N- to C-terminus: MARNRLTESEMNEALRALDGWQKVDGREAITRSFKFKDFSTAFGFMAQAALYAEKLDHHPEWFNAYNRVDVTLATHSENGVTELDIKMARKMNAIAG.

This sequence belongs to the pterin-4-alpha-carbinolamine dehydratase family.

It catalyses the reaction (4aS,6R)-4a-hydroxy-L-erythro-5,6,7,8-tetrahydrobiopterin = (6R)-L-erythro-6,7-dihydrobiopterin + H2O. The polypeptide is Putative pterin-4-alpha-carbinolamine dehydratase (Brucella abortus (strain S19)).